The sequence spans 858 residues: MQEQYNPQDIEHKVQQHWDNNKTFVVSEDPNKEKFYCLSMFPYPSGRLHMGHVRNYTIGDVVSRFQRLQGKNVLQPIGWDAFGLPAENAAVKNNTAPAPWTYENIEYMKNQLKLLGFGYDWNREFATCRPEYYRWEQEFFTKLFAKGLVYKKTSSVNWCPNDQTVLANEQVEDGCCWRCDTPVEQKEIPQWFIKITAYAQELLDDLDNLDGWPEMVKTMQRNWIGRSEGVELKFAVKGENTDLEVYTTRPDTLMGVTYVGIAAGHPLATKAAANNPALAAFIDECKNTKVAEAEIATMEKKGMATGLTAIHPLNGREVPIYIANFVLMDYGTGAVMAVPAHDQRDFEFATKYGLDIIPVIKPADGSELDVSEAAYTEKGVLFASGEFDGLDFQAAFNAIAAKLEAEGKGKKTVNFRLRDWGVSRQRYWGAPIPMVTTEDGQVHPVPADQLPVILPEDVVMDGVTSPIKADKEWAKTTFNGEPALRETDTFDTFMESSWYYARYCSPQADDILDPEKANYWLPVDQYIGGIEHACMHLLYSRFFHKLLRDAGYVKSDEPFKKLLCQGMVLADAFYYTNDKGGKEWVSPTEVKVERDGKGRIVSAVDATGRQVEHSGMIKMSKSKNNGIDPQEMVDKYGADTVRLFMMFASPADMTLEWQESGVEGANRFLRRVWKLVREHTELGQAPALDASALNADQKALRRDVHKTIAKVTDDVARRQTFNTAIAAIMELMNKLTKAPMTEAQDRAILDEALKAITLMLYPITPHICFEMWVALGQSNIDTASWPTYDEAALVEDEKLIVLQVNGKLRGKLTVAADATQQQVEALGMQDENVQKFIDGLTVRKVIYVPGKLLNIVAN.

Positions 42–52 (PYPSGRLHMGH) match the 'HIGH' region motif. The 'KMSKS' region signature appears at 618–622 (KMSKS). Residue Lys-621 coordinates ATP.

Belongs to the class-I aminoacyl-tRNA synthetase family.

It localises to the cytoplasm. The catalysed reaction is tRNA(Leu) + L-leucine + ATP = L-leucyl-tRNA(Leu) + AMP + diphosphate. The polypeptide is Leucine--tRNA ligase (Vibrio cholerae serotype O1 (strain ATCC 39315 / El Tor Inaba N16961)).